The following is a 183-amino-acid chain: ESX-1 secretion-associated protein EspH (183 aa).

Acidic residues predominate over residues 1 to 16 (MVDPPGNDDDHGDLDA). The interval 1–32 (MVDPPGNDDDHGDLDALDFSAAHTNEASPLDA) is disordered.

This Mycobacterium tuberculosis (strain ATCC 25618 / H37Rv) protein is ESX-1 secretion-associated protein EspH.